Here is a 314-residue protein sequence, read N- to C-terminus: Malate dehydrogenase (314 aa).

NAD(+) is bound by residues 12–17 and Asp-36; that span reads GAGNIG. Residues Arg-85 and Arg-91 each contribute to the substrate site. NAD(+)-binding positions include Asn-98 and 121–123; that span reads VTN. Asn-123 and Arg-154 together coordinate substrate. His-178 serves as the catalytic Proton acceptor.

This sequence belongs to the LDH/MDH superfamily. MDH type 3 family.

It catalyses the reaction (S)-malate + NAD(+) = oxaloacetate + NADH + H(+). In terms of biological role, catalyzes the reversible oxidation of malate to oxaloacetate. This Wolbachia pipientis subsp. Culex pipiens (strain wPip) protein is Malate dehydrogenase.